A 226-amino-acid polypeptide reads, in one-letter code: Thiamine-phosphate synthase (226 aa).

4-amino-2-methyl-5-(diphosphooxymethyl)pyrimidine is bound by residues 46-50 (QLRDK) and N87. Residues D88 and D107 each coordinate Mg(2+). S126 lines the 4-amino-2-methyl-5-(diphosphooxymethyl)pyrimidine pocket. 2-[(2R,5Z)-2-carboxy-4-methylthiazol-5(2H)-ylidene]ethyl phosphate is bound at residue 152-154 (TPT). K155 provides a ligand contact to 4-amino-2-methyl-5-(diphosphooxymethyl)pyrimidine. G183 is a 2-[(2R,5Z)-2-carboxy-4-methylthiazol-5(2H)-ylidene]ethyl phosphate binding site.

This sequence belongs to the thiamine-phosphate synthase family. The cofactor is Mg(2+).

The enzyme catalyses 2-[(2R,5Z)-2-carboxy-4-methylthiazol-5(2H)-ylidene]ethyl phosphate + 4-amino-2-methyl-5-(diphosphooxymethyl)pyrimidine + 2 H(+) = thiamine phosphate + CO2 + diphosphate. It carries out the reaction 2-(2-carboxy-4-methylthiazol-5-yl)ethyl phosphate + 4-amino-2-methyl-5-(diphosphooxymethyl)pyrimidine + 2 H(+) = thiamine phosphate + CO2 + diphosphate. The catalysed reaction is 4-methyl-5-(2-phosphooxyethyl)-thiazole + 4-amino-2-methyl-5-(diphosphooxymethyl)pyrimidine + H(+) = thiamine phosphate + diphosphate. Its pathway is cofactor biosynthesis; thiamine diphosphate biosynthesis; thiamine phosphate from 4-amino-2-methyl-5-diphosphomethylpyrimidine and 4-methyl-5-(2-phosphoethyl)-thiazole: step 1/1. In terms of biological role, condenses 4-methyl-5-(beta-hydroxyethyl)thiazole monophosphate (THZ-P) and 2-methyl-4-amino-5-hydroxymethyl pyrimidine pyrophosphate (HMP-PP) to form thiamine monophosphate (TMP). The chain is Thiamine-phosphate synthase from Mycobacterium sp. (strain JLS).